Consider the following 163-residue polypeptide: Type VII secretion system protein EsaG (163 aa).

As to quaternary structure, interacts with EssD (via C-terminus). Interacts with EssE.

It localises to the cytoplasm. Functionally, component of the type VII secretion system (Ess). Also acts as part of toxin-antitoxin system. Counteracts the toxic effect of EssD via direct interaction. This is Type VII secretion system protein EsaG from Staphylococcus aureus (strain NCTC 8325 / PS 47).